Here is a 379-residue protein sequence, read N- to C-terminus: Succinyl-diaminopimelate desuccinylase (379 aa).

Histidine 70 is a Zn(2+) binding site. The active site involves aspartate 72. Aspartate 103 serves as a coordination point for Zn(2+). Residue glutamate 137 is the Proton acceptor of the active site. Glutamate 138, glutamate 166, and histidine 352 together coordinate Zn(2+).

It belongs to the peptidase M20A family. DapE subfamily. Homodimer. It depends on Zn(2+) as a cofactor. Co(2+) is required as a cofactor.

It catalyses the reaction N-succinyl-(2S,6S)-2,6-diaminopimelate + H2O = (2S,6S)-2,6-diaminopimelate + succinate. Its pathway is amino-acid biosynthesis; L-lysine biosynthesis via DAP pathway; LL-2,6-diaminopimelate from (S)-tetrahydrodipicolinate (succinylase route): step 3/3. Its function is as follows. Catalyzes the hydrolysis of N-succinyl-L,L-diaminopimelic acid (SDAP), forming succinate and LL-2,6-diaminopimelate (DAP), an intermediate involved in the bacterial biosynthesis of lysine and meso-diaminopimelic acid, an essential component of bacterial cell walls. This is Succinyl-diaminopimelate desuccinylase from Burkholderia mallei (strain NCTC 10247).